The chain runs to 298 residues: Rhodomycin D methylesterase DauP (298 aa).

Positions 25–277 (PLLLIAGGNL…VEIENMGHAL (253 aa)) constitute an AB hydrolase-1 domain.

This sequence belongs to the methyl esterase DnrP family.

The catalysed reaction is rhodomycin D + H2O = 10-carboxy-13-deoxycarminomycin + methanol + H(+). The enzyme catalyses 4-O-methylrhodomycin D + H2O = 10-carboxy-13-deoxydaunorubicin + methanol + H(+). It participates in antibiotic biosynthesis; daunorubicin biosynthesis. It functions in the pathway antibiotic biosynthesis; carminomycin biosynthesis. Involved in the biosynthesis of the anthracyclines carminomycin and daunorubicin (daunomycin) which are aromatic polyketide antibiotics that exhibit high cytotoxicity and are widely applied in the chemotherapy of a variety of cancers. Catalyzes the removal of methyl group from the carbomethoxy group of rhodomycin D (10-carbomethoxy-13-deoxycarminomycin) and 4-O-methylrhodomycin D to yield 10-carboxy-13-deoxycarminomycin and 10-carboxy-13-deoxydaunorubicin, respectively. Could be also involved in the decarboxylation of 10-carboxy-13-deoxycarminomycin and 10-carboxy-13-deoxydaunorubicin to yield 13-deoxycarminomycin and 13-deoxydaunorubicin, respectively. It seems that DauK may influence the ability of DauP to carry out the decarboxylation. This Streptomyces sp. (strain C5) protein is Rhodomycin D methylesterase DauP (dauP).